Consider the following 156-residue polypeptide: D-aminoacyl-tRNA deacylase (156 aa).

Residues 142 to 143 carry the Gly-cisPro motif, important for rejection of L-amino acids motif; it reads GP.

Belongs to the DTD family. Homodimer.

Its subcellular location is the cytoplasm. The catalysed reaction is glycyl-tRNA(Ala) + H2O = tRNA(Ala) + glycine + H(+). It carries out the reaction a D-aminoacyl-tRNA + H2O = a tRNA + a D-alpha-amino acid + H(+). Functionally, an aminoacyl-tRNA editing enzyme that deacylates mischarged D-aminoacyl-tRNAs. Also deacylates mischarged glycyl-tRNA(Ala), protecting cells against glycine mischarging by AlaRS. Acts via tRNA-based rather than protein-based catalysis; rejects L-amino acids rather than detecting D-amino acids in the active site. By recycling D-aminoacyl-tRNA to D-amino acids and free tRNA molecules, this enzyme counteracts the toxicity associated with the formation of D-aminoacyl-tRNA entities in vivo and helps enforce protein L-homochirality. The polypeptide is D-aminoacyl-tRNA deacylase (Cupriavidus pinatubonensis (strain JMP 134 / LMG 1197) (Cupriavidus necator (strain JMP 134))).